The primary structure comprises 256 residues: 2-aminoethanethiol dioxygenase (256 aa).

Fe cation is bound by residues His-100, His-102, and His-179.

As to quaternary structure, monomer. Fe cation is required as a cofactor. Ubiquitous, with highest expression in brain, heart and skeletal muscle (at protein level).

It catalyses the reaction cysteamine + O2 = hypotaurine + H(+). The catalysed reaction is N-terminal L-cysteinyl-[protein] + O2 = N-terminal S-hydroxy-S-oxy-L-cysteinyl-[protein] + H(+). Plays a vital role in regulating thiol metabolism and preserving oxygen homeostasis by oxidizing the sulfur of cysteamine and N-terminal cysteine-containing proteins to their corresponding sulfinic acids using O2 as a cosubstrate. Catalyzes the oxidation of cysteamine (2-aminoethanethiol) to hypotaurine. Catalyzes the oxidation of the regulator of G-protein signaling 5 (RGS5). Also oxidizes proteins RGS4 and interleukin-32 (IL32). The sequence is that of 2-aminoethanethiol dioxygenase (Ado) from Mus musculus (Mouse).